A 72-amino-acid polypeptide reads, in one-letter code: MANNNSSNELVVPGVQQALDQMKYEIAQEFGVQLGADSTSRANGSVGGEITKRLVQMAEQQFGGQQYGQQQK.

This sequence belongs to the alpha/beta-type SASP family.

SASP are bound to spore DNA. They are double-stranded DNA-binding proteins that cause DNA to change to an a-like conformation. They protect the DNA backbone from chemical and enzymatic cleavage and are thus involved in dormant spore's high resistance to UV light. The chain is Small, acid-soluble spore protein 1 (Sh-1) from Halobacillus halophilus (strain ATCC 35676 / DSM 2266 / JCM 20832 / KCTC 3685 / LMG 17431 / NBRC 102448 / NCIMB 2269) (Sporosarcina halophila).